The sequence spans 87 residues: Putative membrane protein insertion efficiency factor (87 aa).

Belongs to the UPF0161 family.

It localises to the cell membrane. Functionally, could be involved in insertion of integral membrane proteins into the membrane. This is Putative membrane protein insertion efficiency factor from Ligilactobacillus salivarius (strain UCC118) (Lactobacillus salivarius).